The sequence spans 36 residues: Photosystem II reaction center protein Psb30 (36 aa).

The helical transmembrane segment at 8–28 (IIAQLTVVTLTLLAGPVIVFL) threads the bilayer.

It belongs to the Psb30/Ycf12 family. PSII is composed of 1 copy each of membrane proteins PsbA, PsbB, PsbC, PsbD, PsbE, PsbF, PsbH, PsbI, PsbJ, PsbK, PsbL, PsbM, PsbT, PsbX, PsbY, PsbZ, Psb30/Ycf12, peripheral proteins of the oxygen-evolving complex and a large number of cofactors. It forms dimeric complexes.

The protein localises to the plastid. It localises to the cyanelle thylakoid membrane. A core subunit of photosystem II (PSII), probably helps stabilize the reaction center. The protein is Photosystem II reaction center protein Psb30 of Cyanophora paradoxa.